We begin with the raw amino-acid sequence, 444 residues long: Magnesium transporter MRS2-F (444 aa).

The disordered stretch occupies residues 128-155; that stretch reads FTDMEGESSAVTSPFPALTSTTPNELEM. Polar residues predominate over residues 145 to 155; that stretch reads LTSTTPNELEM. A coiled-coil region spans residues 195–258; it reads VCLESACRSL…QKVRDELEHL (64 aa). Residues 370 to 390 traverse the membrane as a helical segment; the sequence is GVMLSTATVVITAGVAVVGLF. Residues 391–393 carry the Required for magnesium transport activity motif; that stretch reads GMN. The helical transmembrane segment at 415 to 435 threads the bilayer; sequence FWETTLGTIAGCTVMYIVAMG.

This sequence belongs to the CorA metal ion transporter (MIT) (TC 1.A.35.5) family.

It is found in the membrane. Its function is as follows. Magnesium transporter that may mediate the influx of magnesium. This chain is Magnesium transporter MRS2-F (MRS2-F), found in Oryza sativa subsp. indica (Rice).